The following is a 586-amino-acid chain: CTP synthase (586 aa).

The tract at residues 1–265 (MVRFIFVTGG…ENKVLNFFNI (265 aa)) is amidoligase domain. CTP is bound at residue S13. S13 serves as a coordination point for UTP. ATP contacts are provided by residues 14–19 (SLGKGI) and D71. Residues D71 and E139 each contribute to the Mg(2+) site. CTP-binding positions include 146 to 148 (DIE), 186 to 191 (KTKPTQ), and K222. Residues 186-191 (KTKPTQ) and K222 contribute to the UTP site. The 293-residue stretch at 290–582 (KIAIITKYHK…IKATIEYNKS (293 aa)) folds into the Glutamine amidotransferase type-1 domain. G352 lines the L-glutamine pocket. C379 functions as the Nucleophile; for glutamine hydrolysis in the catalytic mechanism. Residues 380–383 (FGMQ) and E403 contribute to the L-glutamine site. The RPE1 insert domain maps to 429 to 473 (AHISKCTYSEAFECDASTVYTNIHEDSNNLSTDKLQIETNFRNMS). R510 contributes to the L-glutamine binding site. Catalysis depends on residues H555 and E557.

It belongs to the CTP synthase family. As to quaternary structure, homotetramer.

The enzyme catalyses UTP + L-glutamine + ATP + H2O = CTP + L-glutamate + ADP + phosphate + 2 H(+). The catalysed reaction is L-glutamine + H2O = L-glutamate + NH4(+). It carries out the reaction UTP + NH4(+) + ATP = CTP + ADP + phosphate + 2 H(+). Its pathway is pyrimidine metabolism; CTP biosynthesis via de novo pathway; CTP from UDP: step 2/2. Its activity is regulated as follows. Allosterically activated by GTP, when glutamine is the substrate; GTP has no effect on the reaction when ammonia is the substrate. The allosteric effector GTP functions by stabilizing the protein conformation that binds the tetrahedral intermediate(s) formed during glutamine hydrolysis. Inhibited by the product CTP, via allosteric rather than competitive inhibition. Catalyzes the ATP-dependent amination of UTP to CTP with either L-glutamine or ammonia as the source of nitrogen. Regulates intracellular CTP levels through interactions with the four ribonucleotide triphosphates. This is CTP synthase from Rickettsia prowazekii (strain Madrid E).